We begin with the raw amino-acid sequence, 403 residues long: Alpha-1-antiproteinase F (403 aa).

Positions 1–22 are cleaved as a signal peptide; that stretch reads SAIPRGLLLLAGLCCLVFGIMA. N-linked (GlcNAc...) asparagine glycosylation is found at Asn-55, Asn-92, Asn-155, Asn-222, and Asn-256. Positions 358 to 377 are RCL; sequence GATELEITPHSVPQDLFFNK.

Belongs to the serpin family.

It localises to the secreted. In terms of biological role, inhibits elastase, chymotrypsin, cathepsin G, plasmin, and trypsin. The chain is Alpha-1-antiproteinase F from Cavia porcellus (Guinea pig).